We begin with the raw amino-acid sequence, 88 residues long: UPF0298 protein Bcer98_2635 (88 aa).

Belongs to the UPF0298 family.

It is found in the cytoplasm. This chain is UPF0298 protein Bcer98_2635, found in Bacillus cytotoxicus (strain DSM 22905 / CIP 110041 / 391-98 / NVH 391-98).